The sequence spans 366 residues: Phospho-N-acetylmuramoyl-pentapeptide-transferase (366 aa).

A run of 10 helical transmembrane segments spans residues 27–47 (GAAITSLVLCWLLGRPMISLL), 76–96 (PTMGGLLILLAVSLSCLIWVI), 101–121 (FFWLSLLSMLFMGGIGFWDDF), 136–156 (IKLLAQAIVGVVVGIVLLADP), 176–196 (IDIGWMAIPFFILVVMGSSNA), 205–225 (GLAAGCTIGVAFVYAVFSYIS), 241–261 (GAGELTIFCSALIGACMGFLW), 264–284 (CYPAAVFMGDTGSLAIGSALG), 285–305 (VVAIILGQELLLVIAGGIFVI), and 343–363 (AVTVRFWILSLLFGLLALSSL).

The protein belongs to the glycosyltransferase 4 family. MraY subfamily. Mg(2+) is required as a cofactor.

The protein localises to the cell inner membrane. It carries out the reaction UDP-N-acetyl-alpha-D-muramoyl-L-alanyl-gamma-D-glutamyl-meso-2,6-diaminopimeloyl-D-alanyl-D-alanine + di-trans,octa-cis-undecaprenyl phosphate = di-trans,octa-cis-undecaprenyl diphospho-N-acetyl-alpha-D-muramoyl-L-alanyl-D-glutamyl-meso-2,6-diaminopimeloyl-D-alanyl-D-alanine + UMP. It functions in the pathway cell wall biogenesis; peptidoglycan biosynthesis. In terms of biological role, catalyzes the initial step of the lipid cycle reactions in the biosynthesis of the cell wall peptidoglycan: transfers peptidoglycan precursor phospho-MurNAc-pentapeptide from UDP-MurNAc-pentapeptide onto the lipid carrier undecaprenyl phosphate, yielding undecaprenyl-pyrophosphoryl-MurNAc-pentapeptide, known as lipid I. This Methylacidiphilum infernorum (isolate V4) (Methylokorus infernorum (strain V4)) protein is Phospho-N-acetylmuramoyl-pentapeptide-transferase.